The primary structure comprises 84 residues: Sulfur carrier protein TusA (84 aa).

Residue Cys21 is the Cysteine persulfide intermediate of the active site.

The protein belongs to the sulfur carrier protein TusA family.

It is found in the cytoplasm. Its function is as follows. Sulfur carrier protein which probably makes part of a sulfur-relay system. In Pseudomonas savastanoi pv. phaseolicola (strain 1448A / Race 6) (Pseudomonas syringae pv. phaseolicola (strain 1448A / Race 6)), this protein is Sulfur carrier protein TusA.